Consider the following 200-residue polypeptide: Putative HTH-type transcriptional regulator YhjB (200 aa).

The 66-residue stretch at 135-200 (DIKDLKSLSA…QAAMMLNISS (66 aa)) folds into the HTH luxR-type domain. The H-T-H motif DNA-binding region spans 159 to 178 (NKEIGRALNISTGTVKAHLE).

In Escherichia coli (strain K12), this protein is Putative HTH-type transcriptional regulator YhjB (yhjB).